The sequence spans 538 residues: Hydroxylamine reductase (538 aa).

[4Fe-4S] cluster is bound by residues cysteine 3, cysteine 6, cysteine 15, and cysteine 21. Residues histidine 239, glutamate 263, cysteine 307, cysteine 394, cysteine 422, cysteine 447, glutamate 481, and lysine 483 each coordinate hybrid [4Fe-2O-2S] cluster. Cysteine 394 bears the Cysteine persulfide mark.

The protein belongs to the HCP family. The cofactor is [4Fe-4S] cluster. Hybrid [4Fe-2O-2S] cluster is required as a cofactor.

It localises to the cytoplasm. It catalyses the reaction A + NH4(+) + H2O = hydroxylamine + AH2 + H(+). In terms of biological role, catalyzes the reduction of hydroxylamine to form NH(3) and H(2)O. In Solidesulfovibrio magneticus (strain ATCC 700980 / DSM 13731 / RS-1) (Desulfovibrio magneticus), this protein is Hydroxylamine reductase.